The following is a 204-amino-acid chain: Large ribosomal subunit protein uL4 (204 aa).

Positions 48 to 75 (HTKGRSDVSGGGKKPWRQKGRGGARAGS) are disordered.

The protein belongs to the universal ribosomal protein uL4 family. As to quaternary structure, part of the 50S ribosomal subunit.

In terms of biological role, one of the primary rRNA binding proteins, this protein initially binds near the 5'-end of the 23S rRNA. It is important during the early stages of 50S assembly. It makes multiple contacts with different domains of the 23S rRNA in the assembled 50S subunit and ribosome. Functionally, forms part of the polypeptide exit tunnel. The polypeptide is Large ribosomal subunit protein uL4 (Campylobacter fetus subsp. fetus (strain 82-40)).